Here is a 187-residue protein sequence, read N- to C-terminus: Elongation factor P (187 aa).

This sequence belongs to the elongation factor P family.

It localises to the cytoplasm. The protein operates within protein biosynthesis; polypeptide chain elongation. In terms of biological role, involved in peptide bond synthesis. Stimulates efficient translation and peptide-bond synthesis on native or reconstituted 70S ribosomes in vitro. Probably functions indirectly by altering the affinity of the ribosome for aminoacyl-tRNA, thus increasing their reactivity as acceptors for peptidyl transferase. In Syntrophus aciditrophicus (strain SB), this protein is Elongation factor P.